A 1222-amino-acid chain; its full sequence is Probable disease resistance protein At5g45510 (1222 aa).

G49–T56 is an ATP binding site. The stretch at G122 to D183 forms a coiled coil. Composition is skewed to basic and acidic residues over residues A171 to T205, G212 to P224, R263 to G279, and S286 to V322. Disordered stretches follow at residues A171 to Y225 and R263 to I327. A Phosphothreonine modification is found at T293. 11 LRR repeats span residues L654–T676, K677–S699, E702–K724, E725–V747, K785–A806, S813–S835, G836–F856, E861–S883, S884–E906, N907–M929, and Y931–T951.

It belongs to the disease resistance NB-LRR family.

Its function is as follows. Probable disease resistance protein. This is Probable disease resistance protein At5g45510 from Arabidopsis thaliana (Mouse-ear cress).